The sequence spans 115 residues: NADH-ubiquinone oxidoreductase chain 3 (115 aa).

Transmembrane regions (helical) follow at residues Leu4–Leu24, Phe55–Ile75, and Met87–Ile107.

The protein belongs to the complex I subunit 3 family. In terms of assembly, core subunit of respiratory chain NADH dehydrogenase (Complex I) which is composed of 45 different subunits. Interacts with TMEM186. Interacts with TMEM242.

It is found in the mitochondrion inner membrane. The catalysed reaction is a ubiquinone + NADH + 5 H(+)(in) = a ubiquinol + NAD(+) + 4 H(+)(out). Core subunit of the mitochondrial membrane respiratory chain NADH dehydrogenase (Complex I) which catalyzes electron transfer from NADH through the respiratory chain, using ubiquinone as an electron acceptor. Essential for the catalytic activity of complex I. The chain is NADH-ubiquinone oxidoreductase chain 3 from Neotoma floridana (Eastern woodrat).